Reading from the N-terminus, the 139-residue chain is D-ribose pyranase (139 aa).

His-20 (proton donor) is an active-site residue. Residues Asp-28, His-106, and 128 to 130 (YAN) contribute to the substrate site.

This sequence belongs to the RbsD / FucU family. RbsD subfamily. As to quaternary structure, homodecamer.

The protein resides in the cytoplasm. It catalyses the reaction beta-D-ribopyranose = beta-D-ribofuranose. Its pathway is carbohydrate metabolism; D-ribose degradation; D-ribose 5-phosphate from beta-D-ribopyranose: step 1/2. Functionally, catalyzes the interconversion of beta-pyran and beta-furan forms of D-ribose. This is D-ribose pyranase from Serratia proteamaculans (strain 568).